The primary structure comprises 251 residues: Imidazole glycerol phosphate synthase subunit HisF (251 aa).

Active-site residues include Asp11 and Asp130.

The protein belongs to the HisA/HisF family. Heterodimer of HisH and HisF.

It is found in the cytoplasm. The enzyme catalyses 5-[(5-phospho-1-deoxy-D-ribulos-1-ylimino)methylamino]-1-(5-phospho-beta-D-ribosyl)imidazole-4-carboxamide + L-glutamine = D-erythro-1-(imidazol-4-yl)glycerol 3-phosphate + 5-amino-1-(5-phospho-beta-D-ribosyl)imidazole-4-carboxamide + L-glutamate + H(+). Its pathway is amino-acid biosynthesis; L-histidine biosynthesis; L-histidine from 5-phospho-alpha-D-ribose 1-diphosphate: step 5/9. Functionally, IGPS catalyzes the conversion of PRFAR and glutamine to IGP, AICAR and glutamate. The HisF subunit catalyzes the cyclization activity that produces IGP and AICAR from PRFAR using the ammonia provided by the HisH subunit. This Natranaerobius thermophilus (strain ATCC BAA-1301 / DSM 18059 / JW/NM-WN-LF) protein is Imidazole glycerol phosphate synthase subunit HisF.